We begin with the raw amino-acid sequence, 409 residues long: Protein naked cuticle homolog 2-like (409 aa).

A lipid anchor (N-myristoyl glycine) is attached at glycine 2. An EF-hand domain is found at alanine 109–valine 144. 5 residues coordinate Ca(2+): aspartate 122, aspartate 124, serine 126, lysine 128, and aspartate 133. 4 disordered regions span residues valine 166–aspartate 224, threonine 243–glycine 315, asparagine 346–arginine 367, and arginine 388–threonine 409. Composition is skewed to basic and acidic residues over residues alanine 171–serine 185 and valine 193–aspartate 224. Low complexity predominate over residues aspartate 247 to proline 268. A compositionally biased stretch (basic residues) spans histidine 389–threonine 409.

It belongs to the NKD family.

The protein localises to the cell membrane. The protein resides in the cytoplasm. Its function is as follows. Cell autonomous antagonist of both the canonical and non-canonical Wnt signaling pathways. This Danio rerio (Zebrafish) protein is Protein naked cuticle homolog 2-like (nkd2l).